Reading from the N-terminus, the 1336-residue chain is Misshapen-like kinase 1 (1336 aa).

The Protein kinase domain maps to 25 to 289 (FELVEVVGNG…TEQLLKFPFI (265 aa)). ATP-binding positions include 31 to 39 (VGNGTYGQV) and K54. Residue D153 is the Proton acceptor of the active site. 3 disordered regions span residues 299–347 (RIQL…NVPG), 363–383 (KSNS…QRDP), and 395–890 (QRRI…GGTM). Positions 317–333 (EETEYEYSGSEEEDDSH) are enriched in acidic residues. Phosphoserine is present on residues S324 and S326. The segment covering 371-380 (QQQQLQQQQQ) has biased composition (low complexity). A compositionally biased stretch (basic and acidic residues) spans 396-466 (RRIEEQKEER…EEQRQSERLQ (71 aa)). A compositionally biased stretch (low complexity) spans 479 to 496 (QKQQQQQQQQQQQQQQQQ). R502 and R510 each carry omega-N-methylarginine. The span at 519–529 (AWAREVEERAR) shows a compositional bias: basic and acidic residues. A compositionally biased stretch (polar residues) spans 531–544 (NKQQNSPLAKTKPS). Pro residues predominate over residues 548–562 (PEPPIPQASPSPPGP). Positions 599-609 (RSQSLQDQPTR) are enriched in polar residues. Residues 622–632 (PAAVPTPTATP) show a composition bias toward low complexity. A Phosphoserine modification is found at S643. The segment covering 672 to 684 (QRTSSIATALNTS) has biased composition (polar residues). Position 703 is a phosphoserine (S703). The segment covering 718–731 (PKPPGPPAQPPGPP) has biased composition (pro residues). Residues 738–750 (DLRRSDPGWERSD) show a composition bias toward basic and acidic residues. Residues S756, S765, S781, S782, and S786 each carry the phosphoserine modification. The segment covering 808-825 (LLKERTLDEAPKPPKKAM) has biased composition (basic and acidic residues). The segment covering 832–848 (EEVESSEDEEEEGDGEP) has biased composition (acidic residues). The mediates interaction with RAP2A stretch occupies residues 870–1336 (MVVHDVEEVS…TLNRNCIMNW (467 aa)). T895 is modified (phosphothreonine). The segment at 909–946 (GYTNLPDVVQPSHSPTENSQGQSPPTKDGGGDYQSRGL) is disordered. The segment covering 919–933 (PSHSPTENSQGQSPP) has biased composition (polar residues). The CNH domain occupies 1023-1310 (NSEILCAALW…KFLCERNDKV (288 aa)).

The protein belongs to the protein kinase superfamily. STE Ser/Thr protein kinase family. STE20 subfamily. As to quaternary structure, interacts with RAP2A and NCK1. Interacts with TANC1. It depends on Mg(2+) as a cofactor. Autophosphorylated.

It localises to the cytoplasm. Its subcellular location is the postsynaptic density. The protein resides in the cell projection. It is found in the axon. The protein localises to the dendrite. It catalyses the reaction L-seryl-[protein] + ATP = O-phospho-L-seryl-[protein] + ADP + H(+). The enzyme catalyses L-threonyl-[protein] + ATP = O-phospho-L-threonyl-[protein] + ADP + H(+). Serine/threonine kinase which acts as a negative regulator of Ras-related Rap2-mediated signal transduction to control neuronal structure and AMPA receptor trafficking. Required for normal synaptic density, dendrite complexity, as well as surface AMPA receptor expression in hippocampal neurons. Can activate the JNK and MAPK14/p38 pathways and mediates stimulation of the stress-activated protein kinase MAPK14/p38 MAPK downstream of the Raf/ERK pathway. Phosphorylates TANC1 upon stimulation by RAP2A, MBP and SMAD1. Has an essential function in negative selection of thymocytes, perhaps by coupling NCK1 to activation of JNK1. Activator of the Hippo signaling pathway which plays a pivotal role in organ size control and tumor suppression by restricting proliferation and promoting apoptosis. MAP4Ks act in parallel to and are partially redundant with STK3/MST2 and STK4/MST2 in the phosphorylation and activation of LATS1/2, and establish MAP4Ks as components of the expanded Hippo pathway. This is Misshapen-like kinase 1 (Mink1) from Rattus norvegicus (Rat).